A 311-amino-acid polypeptide reads, in one-letter code: Protein translocase subunit SecF (311 aa).

6 helical membrane-spanning segments follow: residues 23–42 (VSYS…ISIY), 140–160 (IEAG…YIGV), 164–184 (WYFG…ALGF), 194–214 (LSTI…SVVI), 246–266 (ILTV…GGKA), and 272–292 (VLVF…SAPI).

It belongs to the SecD/SecF family. SecF subfamily. As to quaternary structure, forms a complex with SecD. Part of the essential Sec protein translocation apparatus which comprises SecA, SecYEG and auxiliary proteins SecDF-YajC and YidC.

Its subcellular location is the cell inner membrane. Its function is as follows. Part of the Sec protein translocase complex. Interacts with the SecYEG preprotein conducting channel. SecDF uses the proton motive force (PMF) to complete protein translocation after the ATP-dependent function of SecA. The protein is Protein translocase subunit SecF of Rickettsia prowazekii (strain Madrid E).